The sequence spans 65 residues: Large ribosomal subunit protein bL35 (65 aa).

The span at 1 to 15 (MPKMKTKKSAAKRFQ) shows a compositional bias: basic residues. Positions 1 to 26 (MPKMKTKKSAAKRFQVRGSGSIKRGQ) are disordered.

It belongs to the bacterial ribosomal protein bL35 family.

This is Large ribosomal subunit protein bL35 from Bordetella avium (strain 197N).